A 201-amino-acid polypeptide reads, in one-letter code: Potassium-transporting ATPase KdpC subunit (201 aa).

Residues 10-30 (VVLVVLTVICGLAYPLAMTGI) traverse the membrane as a helical segment. Residues 67–105 (HGRPSATSAADPADPTKTVSSPYNAANSSGSNLGPTSKA) form a disordered region. A compositionally biased stretch (low complexity) spans 70-82 (PSATSAADPADPT). The span at 83-105 (KTVSSPYNAANSSGSNLGPTSKA) shows a compositional bias: polar residues.

This sequence belongs to the KdpC family. As to quaternary structure, the system is composed of three essential subunits: KdpA, KdpB and KdpC.

It localises to the cell inner membrane. Its function is as follows. Part of the high-affinity ATP-driven potassium transport (or Kdp) system, which catalyzes the hydrolysis of ATP coupled with the electrogenic transport of potassium into the cytoplasm. This subunit acts as a catalytic chaperone that increases the ATP-binding affinity of the ATP-hydrolyzing subunit KdpB by the formation of a transient KdpB/KdpC/ATP ternary complex. The sequence is that of Potassium-transporting ATPase KdpC subunit from Rhodopseudomonas palustris (strain BisB5).